Here is a 556-residue protein sequence, read N- to C-terminus: Glycosyl hydrolase 5 family protein (556 aa).

The N-terminal stretch at 1 to 28 (MTSAGVAPTALRLLTALLLLLVAAPSHS) is a signal peptide. N-linked (GlcNAc...) asparagine glycosylation is found at N102 and N113. The Proton donor/acceptor role is filled by E208. N-linked (GlcNAc...) asparagine glycosylation is found at N212, N290, and N307. E473 acts as the Nucleophile in catalysis. 2 N-linked (GlcNAc...) asparagine glycosylation sites follow: N474 and N479.

Belongs to the glycosyl hydrolase 5 (cellulase A) family. In terms of processing, glycosylated.

May have glycosyl hydrolase activity. The sequence is that of Glycosyl hydrolase 5 family protein from Chamaecyparis obtusa (Hinoki false-cypress).